Reading from the N-terminus, the 138-residue chain is Basic phospholipase A2 vaspin B chain (138 aa).

Residues 1 to 16 form the signal peptide; sequence MRILWIVAVCLIGVEG. Disulfide bonds link Cys-42/Cys-131, Cys-44/Cys-60, Cys-59/Cys-111, Cys-65/Cys-138, Cys-66/Cys-104, Cys-73/Cys-97, and Cys-91/Cys-102. Residues Tyr-43, Gly-45, and Gly-47 each contribute to the Ca(2+) site. His-63 is a catalytic residue. Asp-64 contacts Ca(2+). Asp-105 is a catalytic residue.

It belongs to the phospholipase A2 family. Group II subfamily. D49 sub-subfamily. Heterodimer of a weakly toxic basic protein having phospholipase A2 activity (B chain (AC Q8JFG1)) and a non-toxic acidic protein functioning as its inhibitor (A chain). It depends on Ca(2+) as a cofactor. As to expression, expressed by the venom gland.

Its subcellular location is the secreted. The catalysed reaction is a 1,2-diacyl-sn-glycero-3-phosphocholine + H2O = a 1-acyl-sn-glycero-3-phosphocholine + a fatty acid + H(+). Functionally, heterodimer: postsynaptic neurotoxin. Its function is as follows. Monomer: snake venom phospholipase A2 (PLA2) that shows postsynaptic neurotoxicity. PLA2 catalyzes the calcium-dependent hydrolysis of the 2-acyl groups in 3-sn-phosphoglycerides. This Vipera aspis aspis (Aspic viper) protein is Basic phospholipase A2 vaspin B chain.